We begin with the raw amino-acid sequence, 650 residues long: Acetyl-coenzyme A synthetase (650 aa).

CoA is bound by residues 189-192 (RGGK), Thr-307, and Asn-331. Residues 383–385 (GEP), 407–412 (DTWWQT), Asp-496, and Arg-511 contribute to the ATP site. Residue Ser-519 coordinates CoA. Arg-522 is a binding site for ATP. Mg(2+) is bound by residues Val-533, His-535, and Val-538. Position 580 (Arg-580) interacts with CoA. Residue Lys-605 is modified to N6-acetyllysine.

The protein belongs to the ATP-dependent AMP-binding enzyme family. Requires Mg(2+) as cofactor. Post-translationally, acetylated. Deacetylation by the SIR2-homolog deacetylase activates the enzyme.

The enzyme catalyses acetate + ATP + CoA = acetyl-CoA + AMP + diphosphate. Functionally, catalyzes the conversion of acetate into acetyl-CoA (AcCoA), an essential intermediate at the junction of anabolic and catabolic pathways. AcsA undergoes a two-step reaction. In the first half reaction, AcsA combines acetate with ATP to form acetyl-adenylate (AcAMP) intermediate. In the second half reaction, it can then transfer the acetyl group from AcAMP to the sulfhydryl group of CoA, forming the product AcCoA. The polypeptide is Acetyl-coenzyme A synthetase (Syntrophobacter fumaroxidans (strain DSM 10017 / MPOB)).